We begin with the raw amino-acid sequence, 73 residues long: MAKEELVEFGGRVSEVLPDSRFRVTLENGFEVWAYSSGRLKKNRIRILAGDRVTLEMSPYDLTKGRINYRHKV.

In terms of domain architecture, S1-like spans Met-1–Lys-72.

It belongs to the IF-1 family. In terms of assembly, component of the 30S ribosomal translation pre-initiation complex which assembles on the 30S ribosome in the order IF-2 and IF-3, IF-1 and N-formylmethionyl-tRNA(fMet); mRNA recruitment can occur at any time during PIC assembly.

The protein resides in the cytoplasm. Functionally, one of the essential components for the initiation of protein synthesis. Stabilizes the binding of IF-2 and IF-3 on the 30S subunit to which N-formylmethionyl-tRNA(fMet) subsequently binds. Helps modulate mRNA selection, yielding the 30S pre-initiation complex (PIC). Upon addition of the 50S ribosomal subunit IF-1, IF-2 and IF-3 are released leaving the mature 70S translation initiation complex. The polypeptide is Translation initiation factor IF-1 3 (Cupriavidus pinatubonensis (strain JMP 134 / LMG 1197) (Cupriavidus necator (strain JMP 134))).